The primary structure comprises 144 residues: Large ribosomal subunit protein uL11 (144 aa).

The protein belongs to the universal ribosomal protein uL11 family. In terms of assembly, part of the ribosomal stalk of the 50S ribosomal subunit. Interacts with L10 and the large rRNA to form the base of the stalk. L10 forms an elongated spine to which L12 dimers bind in a sequential fashion forming a multimeric L10(L12)X complex. Contacts the CTC protein (RL25). One or more lysine residues are methylated.

Its function is as follows. Forms part of the ribosomal stalk which helps the ribosome interact with GTP-bound translation factors. The protein is Large ribosomal subunit protein uL11 of Deinococcus radiodurans (strain ATCC 13939 / DSM 20539 / JCM 16871 / CCUG 27074 / LMG 4051 / NBRC 15346 / NCIMB 9279 / VKM B-1422 / R1).